A 494-amino-acid chain; its full sequence is MANPQTTRVAVVGAGISGVLAAGHLLATGLEVTVFERNAAPGGVWYAIPFSGLLATREADAWARLYDERTPIEPSYPAMKPSKADPPATNEQETSRFMLQHAPPGPCYYNLQNNVPTPLLEVSLKPWPDGTPDTVRHDVIQRFIQDMSIEAKVHDVTRYEARVKKVVKDGAEWKITWSTPQVGLQSETSEFEQVSPFDVVIVASGHYHAPRVPDIPGLSDTKRKYGSRILHSKEYRRPENFRNKNILMIGGGVSSIDIANDISPFANTIYQSTRNSKFDLVESMLPENGVRVHEISHFEIQSHSDEPLSDDEPLPLTIHFESGQNLHGIHMIMLCTGYHITFPYLEEYHSDETTLQDADENILITDGTQVHNLYQDIFYIPDPTLVFVGLPYYTFTFSIFDFQAIVVAQVLSGTVQLPTETEMRSEYNAKVERVGLGKVFHSILGTEENYVHDLLTWVNTSRAAQELVAIKGFSPRWYEAKEALRQKYRAQVNK.

Residues 1 to 21 form the signal peptide; sequence MANPQTTRVAVVGAGISGVLA. 13–18 contacts FAD; sequence GAGISG. A disordered region spans residues 73–93; sequence EPSYPAMKPSKADPPATNEQE. 250-255 is an NADP(+) binding site; it reads GGGVSS. N459 is a glycosylation site (N-linked (GlcNAc...) asparagine).

The protein belongs to the FMO family.

It functions in the pathway mycotoxin biosynthesis. Functionally, flavin-containing monooxygenase; part of the gene cluster that mediates the biosynthesis of the secondary metabolite ustiloxin B, an antimitotic tetrapeptide. First, ustA is processed by the subtilisin-like endoprotease Kex2 that is outside the ustiloxin B gene cluster, at the C-terminal side of Arg-Lys, after transfer to Golgi apparatus through the endoplasmic reticulum (ER). Cleavage by KEX2 generates 16 peptides YAIG-I to YAIG-XVI. To process the precursor peptide further, at least two peptidases are necessary to cleave the N-terminal and C-terminal sides of the Tyr-Ala-Ile-Gly core peptide which serves as backbone for the synthesis of ustiloxin B, through cyclization and modification of the tyrosine with a non-protein coding amino acid, norvaline. One of the two peptidases must be the serine peptidase ustP; and the other pepdidase is probably ustH. Macrocyclization of the core peptide derived from ustA requires the tyrosinase ustQ, as well as the homologous oxidases ustYa and ustYb, and leads to the production of the first cyclization product N-desmethylustiloxin F. For the formation of N-desmethylustiloxin F, three oxidation steps are required, hydroxylation at the benzylic position, hydroxylation at either the aromatic ring of Tyr or beta-position of Ile, and oxidative cyclization. UstQ may catalyze the oxidation of a phenol moiety, whereas the ustYa and ustYb are most likely responsible for the remaining two-step oxidations. N-desmethylustiloxin F is then methylated by ustM to yield ustiloxin F which in turn substrate of the cytochrome P450 monooxygenase ustC which catalyzes the formation of S-deoxyustiloxin H. The flavoprotein monooxygenases ustF1 and ustF2 then participate in the modification of the side chain of S-deoxyustiloxin H, leading to the synthesis of an oxime intermediate, via ustiloxin H. Finally, carboxylative dehydration performed by the cysteine desulfurase-like protein ustD yields ustiloxin B. The sequence is that of Flavin-containing monooxygenase ustF2 from Aspergillus flavus (strain ATCC 200026 / FGSC A1120 / IAM 13836 / NRRL 3357 / JCM 12722 / SRRC 167).